Consider the following 136-residue polypeptide: Protein NrdI (136 aa).

It belongs to the NrdI family.

In terms of biological role, probably involved in ribonucleotide reductase function. The chain is Protein NrdI from Shigella boydii serotype 4 (strain Sb227).